Consider the following 134-residue polypeptide: Putative thioredoxin 2 (134 aa).

One can recognise a Thioredoxin domain in the interval 3–106 (STVELTKENF…LTDVIGQARK (104 aa)). Residues Cys31 and Cys34 are joined by a disulfide bond. The segment at 115-134 (AVAEQQAQAGQNGQEGQEGQ) is disordered. The span at 117-134 (AEQQAQAGQNGQEGQEGQ) shows a compositional bias: low complexity.

Belongs to the thioredoxin family.

It localises to the cytoplasm. Component of the thioredoxin-thioredoxin reductase system. Participates in various redox reactions through the reversible oxidation of its active center dithiol to a disulfide and catalyzes dithiol-disulfide exchange reactions. The protein is Putative thioredoxin 2 (trxC) of Streptomyces coelicolor (strain ATCC BAA-471 / A3(2) / M145).